The chain runs to 70 residues: Mu-agatoxin-Ao1b (70 aa).

The first 20 residues, 1-20 (MKAIIFFCFLSVMVFIVAEA), serve as a signal peptide directing secretion. The propeptide occupies 21-33 (SSLEALKIFEGER). Disulfide bonds link C35/C50, C42/C55, C49/C65, and C57/C63. Residue N69 is modified to Asparagine amide.

It belongs to the neurotoxin 07 (Beta/delta-agtx) family. 04 (aga-5) subfamily. In terms of tissue distribution, expressed by the venom gland.

The protein resides in the secreted. Its function is as follows. Insecticidal neurotoxin that modulates the insect Nav channel (DmNaV1/tipE (para/tipE)) in a unique manner, with both the activation and inactivation processes being affected. The voltage dependence of activation is shifted toward more hyperpolarized potentials (analogous to site 4 toxins) and a non-inactivating persistent sodium current is induced (site 3-like action). Interestingly, both effects take place in a voltage-dependent manner, producing a bell-shaped curve between -80 and 0 mV. This chain is Mu-agatoxin-Ao1b, found in Agelena orientalis (Funnel-web spider).